Here is a 67-residue protein sequence, read N- to C-terminus: Non-specific lipid-transfer protein 2 (67 aa).

Cystine bridges form between Cys-3–Cys-35, Cys-11–Cys-25, Cys-26–Cys-61, and Cys-37–Cys-67.

Belongs to the plant LTP family. As to quaternary structure, monomer. In terms of processing, disulfide bonds.

Its function is as follows. Plant non-specific lipid-transfer proteins transfer phospholipids as well as galactolipids across membranes. May play a role in wax or cutin deposition in the cell walls of expanding epidermal cells and certain secretory tissues. The sequence is that of Non-specific lipid-transfer protein 2 from Apium graveolens var. rapaceum (Celeriac).